Here is a 707-residue protein sequence, read N- to C-terminus: Prolyl endopeptidase-like (707 aa).

Residues serine 538, aspartate 624, and histidine 670 each act as charge relay system in the active site.

Belongs to the peptidase S9A family. Homodimer.

The protein resides in the cytoplasm. It is found in the cytosol. In terms of biological role, serine peptidase whose precise substrate specificity remains unclear. Does not cleave peptides after a arginine or lysine residue. Regulates trans-Golgi network morphology and sorting by regulating the membrane binding of the AP-1 complex. May play a role in the regulation of synaptic vesicle exocytosis. The sequence is that of Prolyl endopeptidase-like (prepl) from Xenopus laevis (African clawed frog).